Here is a 374-residue protein sequence, read N- to C-terminus: S-adenosylmethionine synthase 2 (374 aa).

Glutamate 11 is a binding site for Mg(2+). Position 17 (histidine 17) interacts with ATP. Glutamate 45 provides a ligand contact to K(+). Residues glutamate 58 and glutamine 101 each contribute to the L-methionine site. ATP is bound by residues 169-171 (DGK), 237-240 (SGRF), aspartate 248, 254-255 (RK), alanine 271, lysine 275, and lysine 279. Aspartate 248 is an L-methionine binding site. Lysine 279 lines the L-methionine pocket.

It belongs to the AdoMet synthase family. In terms of assembly, homotetramer. Mn(2+) is required as a cofactor. Mg(2+) serves as cofactor. The cofactor is Co(2+). It depends on K(+) as a cofactor. As to expression, expressed in vegetative and reproductive tissues.

It is found in the cytoplasm. It catalyses the reaction L-methionine + ATP + H2O = S-adenosyl-L-methionine + phosphate + diphosphate. It functions in the pathway amino-acid biosynthesis; S-adenosyl-L-methionine biosynthesis; S-adenosyl-L-methionine from L-methionine: step 1/1. Catalyzes the formation of S-adenosylmethionine from methionine and ATP. The reaction comprises two steps that are both catalyzed by the same enzyme: formation of S-adenosylmethionine (AdoMet) and triphosphate, and subsequent hydrolysis of the triphosphate. This chain is S-adenosylmethionine synthase 2 (SAMS2), found in Pisum sativum (Garden pea).